The primary structure comprises 239 residues: tRNA (guanine-N(1)-)-methyltransferase (239 aa).

Residues G108 and I127–L132 contribute to the S-adenosyl-L-methionine site.

This sequence belongs to the RNA methyltransferase TrmD family. In terms of assembly, homodimer.

It localises to the cytoplasm. It carries out the reaction guanosine(37) in tRNA + S-adenosyl-L-methionine = N(1)-methylguanosine(37) in tRNA + S-adenosyl-L-homocysteine + H(+). Functionally, specifically methylates guanosine-37 in various tRNAs. The protein is tRNA (guanine-N(1)-)-methyltransferase of Lactobacillus helveticus (strain DPC 4571).